The chain runs to 414 residues: Glucose-1-phosphate adenylyltransferase (414 aa).

Residues G164, 181–182, and S199 each bind alpha-D-glucose 1-phosphate; that span reads EK.

This sequence belongs to the bacterial/plant glucose-1-phosphate adenylyltransferase family. Homotetramer.

It catalyses the reaction alpha-D-glucose 1-phosphate + ATP + H(+) = ADP-alpha-D-glucose + diphosphate. The protein operates within glycan biosynthesis; glycogen biosynthesis. In terms of biological role, involved in the biosynthesis of ADP-glucose, a building block required for the elongation reactions to produce glycogen. Catalyzes the reaction between ATP and alpha-D-glucose 1-phosphate (G1P) to produce pyrophosphate and ADP-Glc. The polypeptide is Glucose-1-phosphate adenylyltransferase (Leifsonia xyli subsp. xyli (strain CTCB07)).